A 458-amino-acid chain; its full sequence is V-type ATP synthase beta chain (458 aa).

This sequence belongs to the ATPase alpha/beta chains family.

Produces ATP from ADP in the presence of a proton gradient across the membrane. The V-type beta chain is a regulatory subunit. The sequence is that of V-type ATP synthase beta chain from Enterococcus faecalis (strain ATCC 700802 / V583).